The chain runs to 311 residues: Formimidoylglutamase (311 aa).

The Mn(2+) site is built by His-122, Asp-151, His-153, Asp-155, Cys-242, and Asp-244.

Belongs to the arginase family. Requires Mn(2+) as cofactor.

It catalyses the reaction N-formimidoyl-L-glutamate + H2O = formamide + L-glutamate. It participates in amino-acid degradation; L-histidine degradation into L-glutamate; L-glutamate from N-formimidoyl-L-glutamate (hydrolase route): step 1/1. Functionally, catalyzes the conversion of N-formimidoyl-L-glutamate to L-glutamate and formamide. In Pseudomonas paraeruginosa (strain DSM 24068 / PA7) (Pseudomonas aeruginosa (strain PA7)), this protein is Formimidoylglutamase.